Consider the following 518-residue polypeptide: ATP synthase subunit alpha (518 aa).

An ATP-binding site is contributed by 169-176 (GDRQTGKT).

Belongs to the ATPase alpha/beta chains family. In terms of assembly, F-type ATPases have 2 components, CF(1) - the catalytic core - and CF(0) - the membrane proton channel. CF(1) has five subunits: alpha(3), beta(3), gamma(1), delta(1), epsilon(1). CF(0) has three main subunits: a(1), b(2) and c(9-12). The alpha and beta chains form an alternating ring which encloses part of the gamma chain. CF(1) is attached to CF(0) by a central stalk formed by the gamma and epsilon chains, while a peripheral stalk is formed by the delta and b chains.

It localises to the cell membrane. It catalyses the reaction ATP + H2O + 4 H(+)(in) = ADP + phosphate + 5 H(+)(out). In terms of biological role, produces ATP from ADP in the presence of a proton gradient across the membrane. The alpha chain is a regulatory subunit. This Mycoplasma genitalium (strain ATCC 33530 / DSM 19775 / NCTC 10195 / G37) (Mycoplasmoides genitalium) protein is ATP synthase subunit alpha.